Reading from the N-terminus, the 170-residue chain is Small ribosomal subunit protein uS15 (170 aa).

The segment covering 1–10 (MARMHSRKKG) has biased composition (basic residues). The disordered stretch occupies residues 1–20 (MARMHSRKKGSSGSRPPVVD).

Belongs to the universal ribosomal protein uS15 family. In terms of assembly, part of the 30S ribosomal subunit.

This is Small ribosomal subunit protein uS15 from Methanothrix thermoacetophila (strain DSM 6194 / JCM 14653 / NBRC 101360 / PT) (Methanosaeta thermophila).